The sequence spans 430 residues: Serine hydroxymethyltransferase (430 aa).

Residues leucine 126 and 130-132 (GHL) each bind (6S)-5,6,7,8-tetrahydrofolate. Lysine 235 carries the N6-(pyridoxal phosphate)lysine modification.

Belongs to the SHMT family. In terms of assembly, homodimer. Pyridoxal 5'-phosphate is required as a cofactor.

The protein localises to the cytoplasm. The enzyme catalyses (6R)-5,10-methylene-5,6,7,8-tetrahydrofolate + glycine + H2O = (6S)-5,6,7,8-tetrahydrofolate + L-serine. It participates in one-carbon metabolism; tetrahydrofolate interconversion. The protein operates within amino-acid biosynthesis; glycine biosynthesis; glycine from L-serine: step 1/1. Its function is as follows. Catalyzes the reversible interconversion of serine and glycine with tetrahydrofolate (THF) serving as the one-carbon carrier. This reaction serves as the major source of one-carbon groups required for the biosynthesis of purines, thymidylate, methionine, and other important biomolecules. Also exhibits THF-independent aldolase activity toward beta-hydroxyamino acids, producing glycine and aldehydes, via a retro-aldol mechanism. The protein is Serine hydroxymethyltransferase of Leifsonia xyli subsp. xyli (strain CTCB07).